The following is a 191-amino-acid chain: Peptidyl-tRNA hydrolase (191 aa).

Tyr14 lines the tRNA pocket. Residue His19 is the Proton acceptor of the active site. Positions 65, 67, and 113 each coordinate tRNA.

This sequence belongs to the PTH family. As to quaternary structure, monomer.

Its subcellular location is the cytoplasm. The catalysed reaction is an N-acyl-L-alpha-aminoacyl-tRNA + H2O = an N-acyl-L-amino acid + a tRNA + H(+). Its function is as follows. Hydrolyzes ribosome-free peptidyl-tRNAs (with 1 or more amino acids incorporated), which drop off the ribosome during protein synthesis, or as a result of ribosome stalling. In terms of biological role, catalyzes the release of premature peptidyl moieties from peptidyl-tRNA molecules trapped in stalled 50S ribosomal subunits, and thus maintains levels of free tRNAs and 50S ribosomes. The sequence is that of Peptidyl-tRNA hydrolase from Nitrosospira multiformis (strain ATCC 25196 / NCIMB 11849 / C 71).